Here is a 418-residue protein sequence, read N- to C-terminus: MTTHIHQAWELAKQRFAAVGVDAEAALNQLDRLPVSMHCWQGDDVAGFENPQGQLTGGIQATGNYPGKARNAEELRADLDQALRLIPGPKRLNLHAIYLESDTPVARNEIKPAHFANWVAWARERQLGLDFNPSCFSHPLSADGFTLSHPNPEIRQFWIEHCQASRRVSASFGEQLGTPSVMNIWIPDGMKDTPVDRLAPRRRLLAALDEVIREKLNPAHHIDAVESKLFGIGAESYTVGSNEFYLGYAASRQTALCLDAGHFHPTEVISDKISAAILYVPRLLLHVSRPVRWDSDHVVLLDDETQAIAGEIIRHDLFDRVHIGLDFFDASINRIAAWVIGTRNMKKALLRALLEPTAQLRQLELDGDYTARLALLEEQKSLPWQAVWEMYCERHDTPADAAWLSAVRHYEQHVLSTR.

Mn(2+) is bound by residues H262, D294, and D296.

The protein belongs to the rhamnose isomerase family. In terms of assembly, homotetramer. Mn(2+) is required as a cofactor.

Its subcellular location is the cytoplasm. It catalyses the reaction L-rhamnopyranose = L-rhamnulose. Its pathway is carbohydrate degradation; L-rhamnose degradation; glycerone phosphate from L-rhamnose: step 1/3. Its function is as follows. Catalyzes the interconversion of L-rhamnose and L-rhamnulose. This chain is L-rhamnose isomerase, found in Cronobacter sakazakii (strain ATCC BAA-894) (Enterobacter sakazakii).